The following is a 1331-amino-acid chain: ABC multidrug transporter MDR2 (1331 aa).

Composition is skewed to basic and acidic residues over residues 1–20 (MVEVSEKPNTQDDGVSKQEN) and 31–41 (SDKEKVAKKGN). A disordered region spans residues 1 to 51 (MVEVSEKPNTQDDGVSKQENRNPASSSSSTSDKEKVAKKGNSDATKSSTPE). Helical transmembrane passes span 93 to 113 (MIFLAIVSLASIAAGAALPLF), 147 to 167 (YFVYLGIAQFILLYVSTVGFI), 219 to 239 (KVGLTLTALSTFFSAFIIGYV), and 242 to 262 (WKLALICSSTIVAMILVMGGI). The ABC transmembrane type-1 1 domain maps to 97-387 (AIVSLASIAA…VAPNTQAFAS (291 aa)). The N-linked (GlcNAc...) asparagine glycan is linked to Asn293. 2 helical membrane passes run 325–345 (LGIMFGSMMAIMYSNYGLGFW) and 358–378 (LSAIVNILLAIVIGSFSIGNV). The region spanning 422-667 (IEFRGIKHIY…KGTYLQLVEA (246 aa)) is the ABC transporter 1 domain. An ATP-binding site is contributed by 457–464 (GPSGSGKS). N-linked (GlcNAc...) asparagine glycosylation is present at Asn529. The next 2 helical transmembrane spans lie at 762–782 (LCGFFFAVLSGAGQPVQSVFF) and 810–830 (FLMLGLVQLVTQSAQGVIFAI). Residues 764 to 1051 (GFFFAVLSGA…VFSFSPDMGK (288 aa)) form the ABC transmembrane type-1 2 domain. Asn860 carries N-linked (GlcNAc...) asparagine glycosylation. 4 consecutive transmembrane segments (helical) span residues 884 to 904 (LGTILMVSTTLIVALTVALAF), 910 to 930 (LVCISTVPVLLLCGFYRFWIL), 995 to 1015 (ASQSFSFFCLALGFWYGGGLL), and 1025 to 1045 (FFLCISCVIFGSQSAGIVFSF). Positions 1086–1324 (IEFRDVHFRY…KGRYYELVHM (239 aa)) constitute an ABC transporter 2 domain. Asn1108 carries an N-linked (GlcNAc...) asparagine glycan. Residue 1121 to 1128 (GPSGCGKS) participates in ATP binding.

The protein belongs to the ABC transporter superfamily. ABCB family. Multidrug resistance exporter (TC 3.A.1.201) subfamily.

The protein localises to the cell membrane. It carries out the reaction itraconazole(in) + ATP + H2O = itraconazole(out) + ADP + phosphate + H(+). Its function is as follows. Pleiotropic ABC efflux transporter that may be involved in the modulation susceptibility to a wide range of unrelated cytotoxic compounds, including terbinafine, 4-nitroquinoline N-oxide, and ethidium bromide. May play a role in pathogenicity. In Trichophyton interdigitale (strain MR816), this protein is ABC multidrug transporter MDR2.